A 371-amino-acid polypeptide reads, in one-letter code: MTIDNKIRHIVKEFKAYVPGKSKEEIARNYNINPDEIIKLGSNENPWGSSPKIKEEILKELPNIHQYPEPVNPILMEELSKFTNIPKENIVVGGDGADEIIDTMMRILIDKDDEVIIPIPTFTQYRISAKIYGANIKYAKFDKEKDFKLDVDSVLNNITDKTKIIFLCTPNNPTGNIIDKKDIEKIINSTDALVMIDHAYIEYSKEEYDLTEFALKYDNVLILRTFSKVFGLAGQRIGYGITSKKIVDYMMRVKPIFSITRLSQICAITALRDKEFFEKSKNDGIKSMEILYNGLKEFKELKVYPSEANYLLVEVKNGMSSGEFCVELLKRGVIVRDCKSFEGLDGEYVRVAIGTFEEDRRFLEILKEIVN.

Lysine 228 is modified (N6-(pyridoxal phosphate)lysine).

Belongs to the class-II pyridoxal-phosphate-dependent aminotransferase family. Histidinol-phosphate aminotransferase subfamily. The cofactor is pyridoxal 5'-phosphate.

It carries out the reaction L-histidinol phosphate + 2-oxoglutarate = 3-(imidazol-4-yl)-2-oxopropyl phosphate + L-glutamate. It functions in the pathway amino-acid biosynthesis; L-histidine biosynthesis; L-histidine from 5-phospho-alpha-D-ribose 1-diphosphate: step 7/9. This Methanococcus aeolicus (strain ATCC BAA-1280 / DSM 17508 / OCM 812 / Nankai-3) protein is Histidinol-phosphate aminotransferase.